Consider the following 790-residue polypeptide: Cadherin-18 (790 aa).

Positions 1-24 (MKITSTSCICPVLVCLCFVQRCYG) are cleaved as a signal peptide. Residues 25-53 (TAHHSSIKVMRNQTKHIEGETEVHHRPKR) constitute a propeptide that is removed on maturation. N-linked (GlcNAc...) asparagine glycosylation occurs at Asn36. 5 Cadherin domains span residues 54–159 (GWVW…APKF), 160–268 (TDGP…PPRF), 269–383 (PQKH…PPLF), 384–486 (SMPS…DNPP), and 487–608 (ELAR…FLSS). At 54 to 608 (GWVWNQFFVL…TCHAEAFLSS (555 aa)) the chain is on the extracellular side. The N-linked (GlcNAc...) asparagine glycan is linked to Asn255. Residues Asn455 and Asn536 are each glycosylated (N-linked (GlcNAc...) asparagine). The chain crosses the membrane as a helical span at residues 609 to 636 (AGLSTGALIAILLCVLILLAIVVLFITL). Over 637-790 (RRSKKEPLII…YGEIESERTT (154 aa)) the chain is Cytoplasmic. Position 786 is a phosphoserine (Ser786).

It is found in the cell membrane. Its function is as follows. Cadherins are calcium-dependent cell adhesion proteins. They preferentially interact with themselves in a homophilic manner in connecting cells; cadherins may thus contribute to the sorting of heterogeneous cell types. The polypeptide is Cadherin-18 (CDH18) (Homo sapiens (Human)).